The primary structure comprises 645 residues: DNA mismatch repair protein MutL (645 aa).

The segment at 371–403 (VHDQKDKNHDVESHKNNLDSTSSTNNESTEVSN) is disordered. Residues 372 to 387 (HDQKDKNHDVESHKNN) show a composition bias toward basic and acidic residues. Positions 390–402 (STSSTNNESTEVS) are enriched in low complexity.

This sequence belongs to the DNA mismatch repair MutL/HexB family.

Its function is as follows. This protein is involved in the repair of mismatches in DNA. It is required for dam-dependent methyl-directed DNA mismatch repair. May act as a 'molecular matchmaker', a protein that promotes the formation of a stable complex between two or more DNA-binding proteins in an ATP-dependent manner without itself being part of a final effector complex. The sequence is that of DNA mismatch repair protein MutL from Staphylococcus epidermidis (strain ATCC 35984 / DSM 28319 / BCRC 17069 / CCUG 31568 / BM 3577 / RP62A).